Reading from the N-terminus, the 496-residue chain is MELESSPPLPPHVMLVSFPGQGHVNPLLRLGKLLASKGLLITFVTTESWGKKMRISNKIQDRVLKPVGKGYLRYDFFDDGLPEDDEASRTNLTILRPHLELVGKREIKNLVKRYKEVTKQPVTCLINNPFVSWVCDVAEDLQIPCAVLWVQSCACLAAYYYYHHNLVDFPTKTEPEIDVQISGMPLLKHDEIPSFIHPSSPHSALREVIIDQIKRLHKTFSIFIDTFNSLEKDIIDHMSTLSLPGVIRPLGPLYKMAKTVAYDVVKVNISEPTDPCMEWLDSQPVSSVVYISFGTVAYLKQEQIDEIAYGVLNADVTFLWVIRQQELGFNKEKHVLPEEVKGKGKIVEWCSQEKVLSHPSVACFVTHCGWNSTMEAVSSGVPTVCFPQWGDQVTDAVYMIDVWKTGVRLSRGEAEERLVPREEVAERLREVTKGEKAIELKKNALKWKEEAEAAVARGGSSDRNLEKFVEKLGAKPVGKVQNGSHNHVLAGSIKSF.

His23 (proton acceptor) is an active-site residue. His23 is a binding site for an anthocyanidin. UDP-alpha-D-glucose-binding residues include Gln352, His367, Trp370, Asn371, Ser372, and Glu375. An an anthocyanidin-binding site is contributed by Gly390. Residues Asp391 and Gln392 each coordinate UDP-alpha-D-glucose.

It belongs to the UDP-glycosyltransferase family. In terms of tissue distribution, expressed in roots, cotyledons, leaf veins and trichomes.

It carries out the reaction (E)-sinapate + UDP-alpha-D-glucose = 1-O-(trans-sinapoyl)-beta-D-glucose + UDP. Sinapate glucosyltransferase (SGT) required for the biosynthesis of the glucose ester sinapoylglucose and subsequently sinapoylmalate and sinapoylcholine. Is the major SGT activity in plant. Plays an important role in sinapoylation of anthocyanins. Sinapoylglucose produced by UGT84A2 is a significant source of sinapoyl moieties for anthocyanins. Indole-3-butyric acid (IBA)-specific glucosyltransferase that catalyzes the glucosylation of the auxin IBA, but not indole-3-acetic acid (IAA). May be involved in flowering regulation through IBA-mediated transcriptional repression of the auxin-response factors ARF6 and ARF8 and downstream flowering pathway genes. Can glucosylate the phytotoxic xenobiotic compound 2,4,5-trichlorophenol (TCP). The protein is UDP-glycosyltransferase 84A2 of Arabidopsis thaliana (Mouse-ear cress).